We begin with the raw amino-acid sequence, 303 residues long: Probable 5-dehydro-4-deoxyglucarate dehydratase (303 aa).

It belongs to the DapA family.

It catalyses the reaction 5-dehydro-4-deoxy-D-glucarate + H(+) = 2,5-dioxopentanoate + CO2 + H2O. The protein operates within carbohydrate acid metabolism; D-glucarate degradation; 2,5-dioxopentanoate from D-glucarate: step 2/2. This Pseudomonas fluorescens (strain Pf0-1) protein is Probable 5-dehydro-4-deoxyglucarate dehydratase.